The primary structure comprises 1228 residues: Ribosomal RNA-processing protein 12 (1228 aa).

2 positions are modified to phosphoserine: Ser-1059 and Ser-1067. A disordered region spans residues 1168-1228 (GPVRGQRNKL…GPKFKSRKKL (61 aa)). Over residues 1212-1228 (IGKHNKKGPKFKSRKKL) the composition is skewed to basic residues.

Belongs to the RRP12 family. As to quaternary structure, interacts with GSP1.

It is found in the cytoplasm. Its subcellular location is the nucleus. The protein localises to the nucleolus. Functionally, in association with GSP1, required for nuclear export of both pre-40S and pre-60S ribosomal subunits. Required for the late maturation of the 18S and 5.8S rRNA of the pre-40S ribosomes and for maturation of the 25S and 5.8S rRNA of the pre-60S ribosomes. This chain is Ribosomal RNA-processing protein 12 (RRP12), found in Saccharomyces cerevisiae (strain ATCC 204508 / S288c) (Baker's yeast).